The sequence spans 301 residues: Nucleotide-binding protein MAB_2783c (301 aa).

24-31 (GLSGAGRG) is an ATP binding site. 75–78 (DVRS) serves as a coordination point for GTP.

Belongs to the RapZ-like family.

In terms of biological role, displays ATPase and GTPase activities. The chain is Nucleotide-binding protein MAB_2783c from Mycobacteroides abscessus (strain ATCC 19977 / DSM 44196 / CCUG 20993 / CIP 104536 / JCM 13569 / NCTC 13031 / TMC 1543 / L948) (Mycobacterium abscessus).